A 227-amino-acid polypeptide reads, in one-letter code: MLLTIDNVLTEEELAAASSLLAESAWVSGLVTAGAQAAKVKNNQQLPEDSPQMAALRGLVLGALNRNALFFTATLPKKIMPPFFNRYSGKTNHYGFHVDNAMRMLPDGVGYVRADVSATLFLSNPQTYDGGELVINDTFGQQSVKLQAGSMVIYPSSSVHQVTPVTHGERIACFMFIQSMVRDPNQRRLLYEMDMALLQLRQNIGETEAVVSLTGTYHNLLRQWAES.

In terms of domain architecture, Fe2OG dioxygenase spans 78-179 (KIMPPFFNRY…RIACFMFIQS (102 aa)). 3 residues coordinate Fe cation: His-97, Asp-99, and His-160. Position 170 (Arg-170) interacts with 2-oxoglutarate.

Fe(2+) is required as a cofactor. The cofactor is L-ascorbate.

In Nitrosomonas eutropha (strain DSM 101675 / C91 / Nm57), this protein is PKHD-type hydroxylase Neut_0373.